The sequence spans 398 residues: Phosphoglycerate kinase (398 aa).

Substrate is bound by residues 21–23 (DFN), Arg-36, 59–62 (HLGR), Arg-119, and Arg-157. ATP is bound by residues Lys-208, Gly-296, Glu-327, and 354–357 (GGDS).

This sequence belongs to the phosphoglycerate kinase family. Monomer.

It localises to the cytoplasm. The catalysed reaction is (2R)-3-phosphoglycerate + ATP = (2R)-3-phospho-glyceroyl phosphate + ADP. It functions in the pathway carbohydrate degradation; glycolysis; pyruvate from D-glyceraldehyde 3-phosphate: step 2/5. The polypeptide is Phosphoglycerate kinase (Streptococcus pneumoniae (strain 70585)).